The following is a 320-amino-acid chain: Cytochrome f (320 aa).

Positions Met1–Ala35 are cleaved as a signal peptide. Tyr36, Cys56, Cys59, and His60 together coordinate heme. A helical membrane pass occupies residues Val286 to Lys306.

It belongs to the cytochrome f family. The 4 large subunits of the cytochrome b6-f complex are cytochrome b6, subunit IV (17 kDa polypeptide, petD), cytochrome f and the Rieske protein, while the 4 small subunits are PetG, PetL, PetM and PetN. The complex functions as a dimer. Heme is required as a cofactor.

It is found in the plastid. It localises to the chloroplast thylakoid membrane. In terms of biological role, component of the cytochrome b6-f complex, which mediates electron transfer between photosystem II (PSII) and photosystem I (PSI), cyclic electron flow around PSI, and state transitions. The polypeptide is Cytochrome f (Acorus calamus (Sweet flag)).